The sequence spans 83 residues: Mu-theraphotoxin-Hhn2f (83 aa).

The N-terminal stretch at 1–21 (MKASMFLALAGLVLLFVVGYA) is a signal peptide. A propeptide spanning residues 22–48 (SESEEKEFPIELLSKIFAVDVFKGEER) is cleaved from the precursor. 3 cysteine pairs are disulfide-bonded: Cys50-Cys65, Cys57-Cys70, and Cys64-Cys77. Position 81 is a leucine amide (Leu81).

It belongs to the neurotoxin 10 (Hwtx-1) family. 15 (Hntx-3) subfamily. Monomer. As to expression, expressed by the venom gland.

Its subcellular location is the secreted. In terms of biological role, lethal neurotoxin. Selectively blocks tetrodotoxin-sensitive voltage-gated sodium channels (Nav). Does not affect tetrodotoxin-resistant voltage-gated sodium channels or calcium channels. The sequence is that of Mu-theraphotoxin-Hhn2f from Cyriopagopus hainanus (Chinese bird spider).